The following is a 187-amino-acid chain: Elongation factor P (187 aa).

Belongs to the elongation factor P family.

Its subcellular location is the cytoplasm. The protein operates within protein biosynthesis; polypeptide chain elongation. In terms of biological role, involved in peptide bond synthesis. Stimulates efficient translation and peptide-bond synthesis on native or reconstituted 70S ribosomes in vitro. Probably functions indirectly by altering the affinity of the ribosome for aminoacyl-tRNA, thus increasing their reactivity as acceptors for peptidyl transferase. This Parvibaculum lavamentivorans (strain DS-1 / DSM 13023 / NCIMB 13966) protein is Elongation factor P.